A 363-amino-acid polypeptide reads, in one-letter code: Phosphoserine aminotransferase (363 aa).

Arg-42 contacts L-glutamate. Pyridoxal 5'-phosphate contacts are provided by residues 76–77, Trp-102, Thr-156, Asp-175, and Gln-198; that span reads GR. N6-(pyridoxal phosphate)lysine is present on Lys-199. Residue 240-241 coordinates pyridoxal 5'-phosphate; the sequence is NT.

Belongs to the class-V pyridoxal-phosphate-dependent aminotransferase family. SerC subfamily. In terms of assembly, homodimer. The cofactor is pyridoxal 5'-phosphate.

It is found in the cytoplasm. It carries out the reaction O-phospho-L-serine + 2-oxoglutarate = 3-phosphooxypyruvate + L-glutamate. The catalysed reaction is 4-(phosphooxy)-L-threonine + 2-oxoglutarate = (R)-3-hydroxy-2-oxo-4-phosphooxybutanoate + L-glutamate. Its pathway is amino-acid biosynthesis; L-serine biosynthesis; L-serine from 3-phospho-D-glycerate: step 2/3. It functions in the pathway cofactor biosynthesis; pyridoxine 5'-phosphate biosynthesis; pyridoxine 5'-phosphate from D-erythrose 4-phosphate: step 3/5. Catalyzes the reversible conversion of 3-phosphohydroxypyruvate to phosphoserine and of 3-hydroxy-2-oxo-4-phosphonooxybutanoate to phosphohydroxythreonine. The polypeptide is Phosphoserine aminotransferase (Shewanella baltica (strain OS155 / ATCC BAA-1091)).